The following is a 107-amino-acid chain: Nucleoid-associated protein Atu0095 (107 aa).

Residues 81–107 are disordered; it reads KGEAQAQEKMADLTAGLPLPPGMKLPF. A compositionally biased stretch (pro residues) spans 98-107; that stretch reads PLPPGMKLPF.

This sequence belongs to the YbaB/EbfC family. Homodimer.

Its subcellular location is the cytoplasm. It localises to the nucleoid. In terms of biological role, binds to DNA and alters its conformation. May be involved in regulation of gene expression, nucleoid organization and DNA protection. In Agrobacterium fabrum (strain C58 / ATCC 33970) (Agrobacterium tumefaciens (strain C58)), this protein is Nucleoid-associated protein Atu0095.